The primary structure comprises 209 residues: Large ribosomal subunit protein uL3 (209 aa).

At Gln-150 the chain carries N5-methylglutamine.

This sequence belongs to the universal ribosomal protein uL3 family. In terms of assembly, part of the 50S ribosomal subunit. Forms a cluster with proteins L14 and L19. Post-translationally, methylated by PrmB.

In terms of biological role, one of the primary rRNA binding proteins, it binds directly near the 3'-end of the 23S rRNA, where it nucleates assembly of the 50S subunit. The protein is Large ribosomal subunit protein uL3 of Escherichia coli O139:H28 (strain E24377A / ETEC).